A 324-amino-acid polypeptide reads, in one-letter code: MQSTQPIQRCALGSQQALPELAVSLLDNLGLITMTGNDKKSYLQGQVTCDVVSLEADQVTWGGHCDAKGKLWSAFRLFHYGDGYAMLQDKSAIDVELRELKKYAVFAKVEINVSDAILLGVCGVQAEQAIAKLTNNAEAAVATFAQGTAVKISPQRWLLVVDANQQDEVLAMLATAPLCDHALWDLYDILEVSPRIPAFAQNEHIPQAVNLQAVNGISFKKGCYTGQETVARAKYRGINKRALYRLSGAIEPSAPETTISLERSVGDNWRAAGEALVSYHFDDGRATGLFVLPNDLEPETQFRLAGQSEQLWQREPLPYSLDDE.

A folate-binding site is contributed by tryptophan 184.

The protein belongs to the tRNA-modifying YgfZ family.

Its subcellular location is the cytoplasm. Its function is as follows. Folate-binding protein involved in regulating the level of ATP-DnaA and in the modification of some tRNAs. It is probably a key factor in regulatory networks that act via tRNA modification, such as initiation of chromosomal replication. This chain is tRNA-modifying protein YgfZ, found in Vibrio vulnificus (strain YJ016).